Consider the following 550-residue polypeptide: Cochlin (550 aa).

An N-terminal signal peptide occupies residues 1–15; sequence MPAAWMPVLRLGAYA. In terms of domain architecture, LCCL spans 28–121; sequence VPIAITCFTR…QTLARWSASF (94 aa). Disulfide bonds link cysteine 34/cysteine 50 and cysteine 54/cysteine 74. The N-linked (GlcNAc...) asparagine glycan is linked to asparagine 100. The segment covering 126–139 has biased composition (polar residues); it reads GKSSTQEATGQAVS. Residues 126-158 form a disordered region; that stretch reads GKSSTQEATGQAVSTARPPTGKRLKKTPEKKTG. 2 VWFA domains span residues 165–350 and 367–537; these read DIAF…VQKL and NIAF…VSDI.

As to quaternary structure, monomer. May form homodimer. Interacts with type II collagen. Interacts with ANXA2. Interacts with SLC44A2. Post-translationally, N-glycosylated.

It is found in the secreted. Its subcellular location is the extracellular space. The protein localises to the extracellular matrix. Functionally, plays a role in the control of cell shape and motility in the trabecular meshwork. The polypeptide is Cochlin (COCH) (Cavia porcellus (Guinea pig)).